The primary structure comprises 284 residues: ATP phosphoribosyltransferase (284 aa).

It belongs to the ATP phosphoribosyltransferase family. Long subfamily. The cofactor is Mg(2+).

It is found in the cytoplasm. The catalysed reaction is 1-(5-phospho-beta-D-ribosyl)-ATP + diphosphate = 5-phospho-alpha-D-ribose 1-diphosphate + ATP. Its pathway is amino-acid biosynthesis; L-histidine biosynthesis; L-histidine from 5-phospho-alpha-D-ribose 1-diphosphate: step 1/9. With respect to regulation, feedback inhibited by histidine. In terms of biological role, catalyzes the condensation of ATP and 5-phosphoribose 1-diphosphate to form N'-(5'-phosphoribosyl)-ATP (PR-ATP). Has a crucial role in the pathway because the rate of histidine biosynthesis seems to be controlled primarily by regulation of HisG enzymatic activity. The polypeptide is ATP phosphoribosyltransferase (Methanococcoides burtonii (strain DSM 6242 / NBRC 107633 / OCM 468 / ACE-M)).